Consider the following 317-residue polypeptide: Cytochrome f (317 aa).

Residues 1–34 form the signal peptide; it reads MKGLKNQIMKKTSLFICTLLFISSIVFHPKITFA. Residues Y35, C55, C58, and H59 each contribute to the heme site. Residues 284-304 form a helical membrane-spanning segment; the sequence is VIGLIAFFIGVGLTQILLVLK.

It belongs to the cytochrome f family. The 4 large subunits of the cytochrome b6-f complex are cytochrome b6, subunit IV (17 kDa polypeptide, PetD), cytochrome f and the Rieske protein, while the 4 small subunits are PetG, PetL, PetM and PetN. The complex functions as a dimer. Heme is required as a cofactor.

The protein resides in the cellular thylakoid membrane. In terms of biological role, component of the cytochrome b6-f complex, which mediates electron transfer between photosystem II (PSII) and photosystem I (PSI), cyclic electron flow around PSI, and state transitions. This chain is Cytochrome f, found in Prochlorococcus marinus (strain MIT 9301).